We begin with the raw amino-acid sequence, 224 residues long: MRLRNNANAPLYLKSQEQYIVNDQQLLKNDLAKVFKNPHLPLHIEIGMGKGDFIVENALHNPQINYLGIEKFPTVIVKAHKKALKHKLDNLAMICFDANAILDLLNSKSIDKIYLNFSDPWPKKRHAKKRLTNPYFLEKFAALLKDDGLIEFKTDNESLFHYTIYDVLLNDLTKYEILFLTYNLYALVNNVELLKNIPTEYEKKFVMQGQRIKKVSFRFLKKND.

The S-adenosyl-L-methionine site is built by Glu45, Glu70, Asp97, and Asp119. Asp119 is a catalytic residue. Substrate contacts are provided by residues Lys123, Asp155, and 199 to 202 (TEYE).

The protein belongs to the class I-like SAM-binding methyltransferase superfamily. TrmB family.

It catalyses the reaction guanosine(46) in tRNA + S-adenosyl-L-methionine = N(7)-methylguanosine(46) in tRNA + S-adenosyl-L-homocysteine. It participates in tRNA modification; N(7)-methylguanine-tRNA biosynthesis. Its function is as follows. Catalyzes the formation of N(7)-methylguanine at position 46 (m7G46) in tRNA. This is tRNA (guanine-N(7)-)-methyltransferase from Ureaplasma urealyticum serovar 10 (strain ATCC 33699 / Western).